An 86-amino-acid polypeptide reads, in one-letter code: Large ribosomal subunit protein uL23 (86 aa).

The protein belongs to the universal ribosomal protein uL23 family. Part of the 50S ribosomal subunit. Contacts protein L29.

Its function is as follows. Binds to 23S rRNA. One of the proteins that surrounds the polypeptide exit tunnel on the outside of the ribosome. This Methanococcus maripaludis (strain DSM 14266 / JCM 13030 / NBRC 101832 / S2 / LL) protein is Large ribosomal subunit protein uL23.